The sequence spans 156 residues: Small ribosomal subunit protein uS7 (156 aa).

It belongs to the universal ribosomal protein uS7 family. As to quaternary structure, part of the 30S ribosomal subunit. Contacts proteins S9 and S11.

Functionally, one of the primary rRNA binding proteins, it binds directly to 16S rRNA where it nucleates assembly of the head domain of the 30S subunit. Is located at the subunit interface close to the decoding center, probably blocks exit of the E-site tRNA. This chain is Small ribosomal subunit protein uS7, found in Alcanivorax borkumensis (strain ATCC 700651 / DSM 11573 / NCIMB 13689 / SK2).